Consider the following 859-residue polypeptide: Toll-like receptor 5 (859 aa).

Residues 1–26 (MACQLDLLIGVIFMASPVLVISPCSS) form the signal peptide. Topologically, residues 27-641 (DGRIAFFRGC…EEEAMRSLKF (615 aa)) are extracellular. N-linked (GlcNAc...) asparagine glycosylation is found at Asn37, Asn46, and Asn84. 9 LRR repeats span residues 45–69 (LNTT…SFPL), 72–94 (RLQL…AFRN), 96–118 (PNLR…AFQG), 121–144 (HLLE…YFRN), 147–167 (SLAR…HSSF), 172–193 (SLSD…ELEP), 198–212 (TLSF…LFSR), 215–230 (VGWE…VRLE), and 235–236 (SE). An N-linked (GlcNAc...) asparagine glycan is attached at Asn246. LRR repeat units follow at residues 261 to 285 (LKHH…TFAS), 290 to 302 (SVLQ…GFIF), 314 to 335 (DLKM…AFYG), 338 to 356 (SLQV…YNSN), 386 to 402 (TLQT…AIGF), and 413 to 432 (GNKL…LELS). Asn343 carries N-linked (GlcNAc...) asparagine glycosylation. A glycan (N-linked (GlcNAc...) asparagine) is linked at Asn438. LRR repeat units lie at residues 450 to 471 (QLQF…HTPS), 475 to 496 (SLEQ…GLCW), 504 to 525 (RLQI…IFND), 528 to 547 (ALRM…PGSL), and 550 to 568 (NLEI…DPAL). The LRRCT domain occupies 580–632 (NEFVCNCELSTFISWLNQTNVTLFGSPADVYCMYPNSLLGGSLYNISTEDCDE). Intrachain disulfides connect Cys584–Cys611 and Cys586–Cys630. N-linked (GlcNAc...) asparagine glycans are attached at residues Asn596, Asn599, and Asn624. The helical transmembrane segment at 642–662 (SLFILCTVTLTLFLVITLVVI) threads the bilayer. Over 663 to 859 (KFRGICFLCY…IQLRTIATIS (197 aa)) the chain is Cytoplasmic. One can recognise a TIR domain in the interval 692 to 837 (YRYDAYFCFS…WFLDKLSGCI (146 aa)). Tyr799 bears the Phosphotyrosine mark.

Belongs to the Toll-like receptor family. In terms of assembly, homodimer. Interacts with MYD88 (via TIR domain). Interacts with TICAM1 (via TIR domain). Interacts with UNC93B1; this interaction is essential for proper TLR5 localization to the plasma membrane. Phosphorylated at Tyr-799 upon flagellin binding; required for signaling. As to expression, highly expressed in liver. Detected in lung and at very low levels in most other tissues.

Its subcellular location is the membrane. In terms of biological role, pattern recognition receptor (PRR) located on the cell surface that participates in the activation of innate immunity and inflammatory response. Recognizes small molecular motifs named pathogen-associated molecular pattern (PAMPs) expressed by pathogens and microbe-associated molecular patterns (MAMPs) usually expressed by resident microbiota. Upon ligand binding such as bacterial flagellins, recruits intracellular adapter proteins MYD88 and TRIF leading to NF-kappa-B activation, cytokine secretion and induction of the inflammatory response. Plays thereby an important role in the relationship between the intestinal epithelium and enteric microbes and contributes to the gut microbiota composition throughout life. The protein is Toll-like receptor 5 (Tlr5) of Mus musculus (Mouse).